Consider the following 512-residue polypeptide: Solute carrier family 40 member 2 (512 aa).

The segment at 1–28 is disordered; the sequence is MEEETETRVFLSNEQHQEEEEEEEEEPS. Positions 17 to 27 are enriched in acidic residues; sequence QEEEEEEEEEP. The next 11 helical transmembrane spans lie at 55–75, 105–125, 133–153, 187–207, 214–234, 310–330, 343–363, 376–396, 405–425, 442–462, and 468–488; these read VALYMIYLWPNSLFLTAMYGV, LVTQNLSFIVAGGAVVALLVV, FPVFATLVVLTNLSGAIGVLS, GIDLSSKLLSPVITGLIISFV, ITFAAWATITVWIEYWLFISV, IVLPGVSLALLFFTVLSFGTL, YIIGIGRGISAGVGLAATVLY, GVWSFWSQWTCLLVCVGSIWV, MLMAGVAASRLGLWMFDLAVI, GVQNSLQSALDLMANLLGIIV, and FWMLTLISFATVSLAGILYTI.

The protein belongs to the ferroportin (FP) (TC 2.A.100) family. SLC40A subfamily.

Its subcellular location is the vacuole membrane. Its function is as follows. Vacuolar transporter that is involved in the transport of excess nickel into the vacuole under iron deficiency, increasing cellular tolerance to nickel under iron deficiency stress response. In Arabidopsis thaliana (Mouse-ear cress), this protein is Solute carrier family 40 member 2 (IREG2).